Reading from the N-terminus, the 339-residue chain is Anthranilate phosphoribosyltransferase (339 aa).

Residues Gly-80, 83 to 84, Thr-88, 90 to 93, 108 to 116, and Ser-120 each bind 5-phospho-alpha-D-ribose 1-diphosphate; these read GD, NIST, and KHGNRSVSS. Anthranilate is bound at residue Gly-80. Ser-92 provides a ligand contact to Mg(2+). Asn-111 serves as a coordination point for anthranilate. Arg-166 is an anthranilate binding site. Residues Asp-225 and Glu-226 each coordinate Mg(2+).

The protein belongs to the anthranilate phosphoribosyltransferase family. In terms of assembly, homodimer. Requires Mg(2+) as cofactor.

The catalysed reaction is N-(5-phospho-beta-D-ribosyl)anthranilate + diphosphate = 5-phospho-alpha-D-ribose 1-diphosphate + anthranilate. The protein operates within amino-acid biosynthesis; L-tryptophan biosynthesis; L-tryptophan from chorismate: step 2/5. Its function is as follows. Catalyzes the transfer of the phosphoribosyl group of 5-phosphorylribose-1-pyrophosphate (PRPP) to anthranilate to yield N-(5'-phosphoribosyl)-anthranilate (PRA). In Moorella thermoacetica (strain ATCC 39073 / JCM 9320), this protein is Anthranilate phosphoribosyltransferase.